The sequence spans 198 residues: Glycerol-3-phosphate acyltransferase (198 aa).

The next 6 membrane-spanning stretches (helical) occupy residues 5-25 (YLII…SIAI), 55-75 (VGLA…YLGF), 79-99 (GSLG…LPVL), 114-134 (VLLF…LIVV), 139-159 (YVSL…LIYI), and 164-184 (YIGL…RSNI).

This sequence belongs to the PlsY family. As to quaternary structure, probably interacts with PlsX.

It localises to the cell membrane. It carries out the reaction an acyl phosphate + sn-glycerol 3-phosphate = a 1-acyl-sn-glycero-3-phosphate + phosphate. It functions in the pathway lipid metabolism; phospholipid metabolism. In terms of biological role, catalyzes the transfer of an acyl group from acyl-phosphate (acyl-PO(4)) to glycerol-3-phosphate (G3P) to form lysophosphatidic acid (LPA). This enzyme utilizes acyl-phosphate as fatty acyl donor, but not acyl-CoA or acyl-ACP. In Finegoldia magna (strain ATCC 29328 / DSM 20472 / WAL 2508) (Peptostreptococcus magnus), this protein is Glycerol-3-phosphate acyltransferase.